Here is a 723-residue protein sequence, read N- to C-terminus: Polyribonucleotide nucleotidyltransferase (723 aa).

Mg(2+) is bound by residues Asp-488 and Asp-494. The region spanning 555–614 is the KH domain; it reads PRMITMKIHPDKIREVIGKGGSTIQALTKETGTTIDIQEDGTITIASTSTEGMAEAKRRI. The S1 motif domain maps to 624 to 692; the sequence is GKIYAGTVLK…EKGRLRLSLK (69 aa). A disordered region spans residues 701-723; it reads SISPINAGESAAPAAPAGGSEQQ. Residues 707-723 show a composition bias toward low complexity; it reads AGESAAPAAPAGGSEQQ.

Belongs to the polyribonucleotide nucleotidyltransferase family. Requires Mg(2+) as cofactor.

Its subcellular location is the cytoplasm. It carries out the reaction RNA(n+1) + phosphate = RNA(n) + a ribonucleoside 5'-diphosphate. Functionally, involved in mRNA degradation. Catalyzes the phosphorolysis of single-stranded polyribonucleotides processively in the 3'- to 5'-direction. This chain is Polyribonucleotide nucleotidyltransferase, found in Cupriavidus taiwanensis (strain DSM 17343 / BCRC 17206 / CCUG 44338 / CIP 107171 / LMG 19424 / R1) (Ralstonia taiwanensis (strain LMG 19424)).